Consider the following 411-residue polypeptide: Elongation factor Tu, apicoplast (411 aa).

Residues 10–214 form the tr-type G domain; sequence KPHVNIGTIG…TVDSYIEKPE (205 aa). The segment at 19–26 is G1; it reads GHVDHGKT. 19–26 serves as a coordination point for GTP; the sequence is GHVDHGKT. Residue T26 participates in Mg(2+) binding. The interval 61 to 65 is G2; that stretch reads GITIN. Residues 82-85 form a G3 region; that stretch reads DCPG. GTP contacts are provided by residues 82 to 86 and 137 to 140; these read DCPGH and NKED. The interval 137–140 is G4; that stretch reads NKED. Positions 175 to 177 are G5; it reads SAL.

Belongs to the TRAFAC class translation factor GTPase superfamily. Classic translation factor GTPase family. EF-Tu/EF-1A subfamily.

The protein localises to the plastid. It localises to the apicoplast. The catalysed reaction is GTP + H2O = GDP + phosphate + H(+). Functionally, GTP hydrolase that promotes the GTP-dependent binding of aminoacyl-tRNA to the A-site of ribosomes during protein biosynthesis. This Theileria parva (East coast fever infection agent) protein is Elongation factor Tu, apicoplast (tufA).